Reading from the N-terminus, the 405-residue chain is Arrestin red cell isoform 2 (405 aa).

Belongs to the arrestin family.

The protein localises to the cytoplasm. The sequence is that of Arrestin red cell isoform 2 from Oncorhynchus mykiss (Rainbow trout).